A 307-amino-acid polypeptide reads, in one-letter code: tRNA dimethylallyltransferase (307 aa).

11–18 (GPTGSGKT) contacts ATP. 13–18 (TGSGKT) is a binding site for substrate. The tract at residues 36–39 (DSVA) is interaction with substrate tRNA.

Belongs to the IPP transferase family. As to quaternary structure, monomer. Mg(2+) is required as a cofactor.

It carries out the reaction adenosine(37) in tRNA + dimethylallyl diphosphate = N(6)-dimethylallyladenosine(37) in tRNA + diphosphate. Catalyzes the transfer of a dimethylallyl group onto the adenine at position 37 in tRNAs that read codons beginning with uridine, leading to the formation of N6-(dimethylallyl)adenosine (i(6)A). This is tRNA dimethylallyltransferase from Koribacter versatilis (strain Ellin345).